The following is a 509-amino-acid chain: Maturase K (509 aa).

This sequence belongs to the intron maturase 2 family. MatK subfamily.

The protein localises to the plastid. It localises to the chloroplast. Usually encoded in the trnK tRNA gene intron. Probably assists in splicing its own and other chloroplast group II introns. This Banksia cuneata (Quairading banksia) protein is Maturase K.